Reading from the N-terminus, the 357-residue chain is Probable butyrate kinase 1 (357 aa).

It belongs to the acetokinase family.

Its subcellular location is the cytoplasm. The catalysed reaction is butanoate + ATP = butanoyl phosphate + ADP. The sequence is that of Probable butyrate kinase 1 from Thermotoga maritima (strain ATCC 43589 / DSM 3109 / JCM 10099 / NBRC 100826 / MSB8).